The chain runs to 102 residues: Large ribosomal subunit protein bL21 (102 aa).

It belongs to the bacterial ribosomal protein bL21 family. As to quaternary structure, part of the 50S ribosomal subunit. Contacts protein L20.

In terms of biological role, this protein binds to 23S rRNA in the presence of protein L20. This chain is Large ribosomal subunit protein bL21, found in Campylobacter lari (strain RM2100 / D67 / ATCC BAA-1060).